We begin with the raw amino-acid sequence, 151 residues long: Large ribosomal subunit protein uL16 (151 aa).

This sequence belongs to the universal ribosomal protein uL16 family. As to quaternary structure, part of the 50S ribosomal subunit.

Binds 23S rRNA and is also seen to make contacts with the A and possibly P site tRNAs. This is Large ribosomal subunit protein uL16 from Chloroflexus aurantiacus (strain ATCC 29364 / DSM 637 / Y-400-fl).